The sequence spans 148 residues: MDHGKYLLTIFLNDDDSFFKYLAAQEDDVAMSDVHTIVDYLNFLLALLIKSKDKLEAVGYYYAPLSEEYKAVFDFTDTKSLKQLFNKQPVYVESDSPICVDKGYLADFVLATTRLKKQLPLVLDKEVTYVDPYKDKRFANILSILHKN.

This chain is MF7 protein, found in Myxoma virus (strain Lausanne) (MYXV).